The sequence spans 130 residues: MSATQNYGTGRRKTATARVFLRPGTGKISINNRGLDQFFGRETARMVVRQPLELTETVEKFDIFVTVVGGGVSGQAGAIRHGITRALIEYDETLRSPLRKAGYVTRDAREVERKKVGLRKARKRPQYSKR.

This sequence belongs to the universal ribosomal protein uS9 family.

The chain is Small ribosomal subunit protein uS9 from Pseudomonas paraeruginosa (strain DSM 24068 / PA7) (Pseudomonas aeruginosa (strain PA7)).